The sequence spans 371 residues: Serine/threonine-protein kinase 17B (371 aa).

Residues 33–293 (TLTPKELGRG…AESCLSHSWL (261 aa)) form the Protein kinase domain. Residues 39-47 (LGRGKFAVV) and K62 each bind ATP. D158 functions as the Proton acceptor in the catalytic mechanism. Residues 308–345 (SESSQTQDLSLRSSEDKTPKSCNGSCGDREDKENIPED) form a disordered region. The segment covering 309–319 (ESSQTQDLSLR) has biased composition (polar residues).

The protein belongs to the protein kinase superfamily. CAMK Ser/Thr protein kinase family. DAP kinase subfamily. Interacts with CHP1; the interaction induces CHP1 to translocate from the Golgi to the nucleus. Post-translationally, autophosphorylated. In terms of tissue distribution, highly expressed in thymus, spleen, and testis, lower levels present in the brain.

The protein resides in the nucleus. It is found in the cell membrane. The protein localises to the endoplasmic reticulum-Golgi intermediate compartment. It carries out the reaction L-seryl-[protein] + ATP = O-phospho-L-seryl-[protein] + ADP + H(+). The enzyme catalyses L-threonyl-[protein] + ATP = O-phospho-L-threonyl-[protein] + ADP + H(+). Functionally, acts as a positive regulator of apoptosis. Phosphorylates myosin light chains. This is Serine/threonine-protein kinase 17B (Stk17b) from Rattus norvegicus (Rat).